We begin with the raw amino-acid sequence, 36 residues long: Beta/delta/mu-theraphotoxin-Pv1 (36 aa).

3 disulfides stabilise this stretch: cysteine 3/cysteine 17, cysteine 10/cysteine 22, and cysteine 16/cysteine 30. Phenylalanine 36 is subject to Phenylalanine amide.

This sequence belongs to the neurotoxin 10 (Hwtx-1) family. As to expression, expressed by the venom gland.

Its subcellular location is the secreted. In terms of biological role, gating-modifier toxin that targets voltage-gated sodium channels. Inhibits the inactivation of Nav1.7/SCN9A. The polypeptide is Beta/delta/mu-theraphotoxin-Pv1 (Poecilotheria vittata (Ghost ornamental tarantula)).